The following is a 948-amino-acid chain: ATPase 2, plasma membrane-type (948 aa).

S2 carries the N-acetylserine modification. Topologically, residues 2–61 (SSLEDIKNETVDLEKIPIEEVFQQLKCSREGLTTQEGEDRIQIFGPNKLEEKKESKLLKF) are cytoplasmic. A helical membrane pass occupies residues 62-81 (LGFMWNPLSWVMEMAAIMAI). Topologically, residues 82–93 (ALANGDGRPPDW) are extracellular. The helical transmembrane segment at 94 to 114 (QDFVGIICLLVINSTISFIEE) threads the bilayer. Residues 115–243 (NNAGNAAAAL…GHFQKVLTAI (129 aa)) are Cytoplasmic-facing. A helical membrane pass occupies residues 244-264 (GNFCICSIAIGMVIEIIVMYP). Topologically, residues 265-273 (IQRRKYRDG) are extracellular. A helical membrane pass occupies residues 274 to 291 (IDNLLVLLIGGIPIAMPT). The Cytoplasmic segment spans residues 292–643 (VLSVTMAIGS…TSRAIFQRMK (352 aa)). D329 functions as the 4-aspartylphosphate intermediate in the catalytic mechanism. Mg(2+) is bound by residues D588 and D592. A helical membrane pass occupies residues 644–665 (NYTIYAVSITIRIVFGFMLIAL). Residues 666–670 (IWEFD) lie on the Extracellular side of the membrane. Residues 671–693 (FSAFMVLIIAILNDGTIMTISKD) traverse the membrane as a helical segment. Over 694 to 709 (RVKPSPTPDSWKLKEI) the chain is Cytoplasmic. The helical transmembrane segment at 710–730 (FATGVVLGGYQAIMTVIFFWA) threads the bilayer. Topologically, residues 731-751 (AHKTDFFSDTFGVRSIRDNNH) are extracellular. The helical transmembrane segment at 752 to 772 (ELMGAVYLQVSIISQALIFVT) threads the bilayer. Residues 773–784 (RSRSWSFVERPG) lie on the Cytoplasmic side of the membrane. A helical membrane pass occupies residues 785–805 (ALLMIAFLIAQLIATLIAVYA). The Extracellular segment spans residues 806–813 (NWEFAKIR). The chain crosses the membrane as a helical span at residues 814–834 (GIGWGWAGVIWLYSIVTYFPL). The Cytoplasmic portion of the chain corresponds to 835-948 (DVFKFAIRYI…DIETPSHYTV (114 aa)). Phosphothreonine is present on T881. Position 899 is a phosphoserine (S899). S931 is modified (phosphoserine; by CIPK11). The interval 946 to 948 (YTV) is interaction with 14-3-3 proteins. T947 bears the Phosphothreonine mark.

Belongs to the cation transport ATPase (P-type) (TC 3.A.3) family. Type IIIA subfamily. In terms of assembly, binds to 14-3-3 proteins. The binding is induced by phosphorylation of Thr-947 and it activates the H(+)-ATPase. Interacts (via the R-domain) with PSY1R (via C-terminus). Part of a functional complex containing PSKR1, BAK1, CNGC17, and AHA. Interacts with CNGC17 and PSKR1. Interacts with PP2C67/PP2C-D1 at the plasma membrane. Interacts with AHA1. Phosphorylated, probably by PHOT1 and PHOT2, at C-terminal Thr-947 in guard cells in response to blue light to induce stomatal opening. In terms of processing, phosphorylation at Thr-881 by PSY1R. This phosphorylation activates proton pumping. Decreased phosphorylation in response to flg22 elicitation. Post-translationally, phosphorylation at Ser-899 is specifically induced by RALF1, thus leading to the inhibition of proton transport. Increased phosphorylation in response to flg22 elicitation. Phosphorylation of Thr-947 induces the binding to 14-3-3 proteins, but phosphorylation of Ser-931 interferes with this binding no matter whether Thr-947 is phosphorylated or not. Decreased phosphorylation in response to flg22 elicitation. Phosphorylation of Thr-947 is enhanced by the presence of brassinolide (BL) via the BRI1-BIN2 pathway and prior the trigger of hypocotyl elongation. Inactivated by PP2C67/PP2C-D1-mediated Thr-947 dephosphorylation; SAUR19 inhibits the action of PP2C67/PP2C-D1 and thus promotes the active phosphorylated form. In terms of processing, abscisic acid induces dephosphorylation of AHA2 in etiolated seedlings, suppressing ATP hydrolysis and hypocotyl elongation. As to expression, higher levels in roots than in shoots. Expressed in epidermal and root cortex cells, in phloem, xylem and root hairs. Detected in cotyledons, leaves, hypocotyls, roots and root hairs. Expressed in guard cells and mesophyll cells.

It is found in the cell membrane. It carries out the reaction ATP + H2O + H(+)(in) = ADP + phosphate + 2 H(+)(out). With respect to regulation, regulated by an auto-inhibitory C-terminal domain that can be displaced by phosphorylation of Thr-947 and the subsequent binding of 14-3-3 proteins. Negatively regulated by PKS5. PKS5 phosphorylates Ser-931, inhibiting interaction with the activating 14-3-3 protein. Positively regulated by PSY1R. PSY1R phosphorylates Thr-881, situated in the auto-inhibitory region I of the C-terminal domain, causing pump activation. Negatively regulated by the secreted peptide RALF. After specific binding to FERONIA, RALF causes phosphorylation at Ser-899, mediating the inhibition of proton transport. Activated by lysophospholipids, without the involvement of phosphorylation of Thr-947. This activation is critically dependent on the single autoinhibitory residue Leu-919. Repressed by PP2C-D phosphatases (e.g. PP2C67/PP2C-D1 and PP2C64/PP2C-D5) which dephosphorylates Thr-947. Triggered by SAUR19 via phosphorylation of the C-terminal autoinhibitory domain (e.g. Thr-947), as a result of the inhibition of PP2C67/PP2C-D1. Phosphorylation on Thr residues is repressed by tyrphostin 9, sphingosine, GW5074 and BML-265. By contrast, the fungal phytotoxin fusicoccin (FC) promotes phosphorylation of Thr-947 independently to BHP, thus leading to large stomatal opening. Its function is as follows. The plasma membrane H(+) ATPase of plants and fungi generates a proton gradient that drives the active transport of nutrients by H(+)-symport. The resulting external acidification and/or internal alkinization may mediate growth responses. Involved in maintaining the membrane potential and delta-pH, together forming the plasma membrane protonmotive force (PMF) required for root and hypocotyl elongation and root tropism. Important for root growth and development during different nitrogen regimes. Forms a functional cation-translocating unit with CNGC17 that is activated by PSKR1/BAK1 and possibly other BAK1/RLK complexes. Promotes stomatal opening in response to blue light. The protein is ATPase 2, plasma membrane-type of Arabidopsis thaliana (Mouse-ear cress).